Reading from the N-terminus, the 602-residue chain is ATP-dependent DNA helicase XPD (602 aa).

A Helicase ATP-binding domain is found at 1–247 (MQKSYGVALE…DLIEMIRSAL (247 aa)). 11 to 18 (SPTGSGKT) serves as a coordination point for ATP. Positions 74, 95, 110, and 146 each coordinate [4Fe-4S] cluster. A DEAH box motif is present at residues 193 to 196 (DEAH). The Helicase C-terminal domain occupies 421–602 (VIEDIILKVK…SAQAREKYGA (182 aa)). SsDNA-binding residues include Trp531 and Arg566.

Belongs to the helicase family. RAD3/XPD subfamily. In terms of assembly, monomer. [4Fe-4S] cluster serves as cofactor.

The catalysed reaction is Couples ATP hydrolysis with the unwinding of duplex DNA at the replication fork by translocating in the 5'-3' direction. This creates two antiparallel DNA single strands (ssDNA). The leading ssDNA polymer is the template for DNA polymerase III holoenzyme which synthesizes a continuous strand.. The enzyme catalyses ATP + H2O = ADP + phosphate + H(+). Its function is as follows. ATP-dependent 5'-3' DNA helicase. Thought to be involved in nucleotide excision repair (NER) of DNA. This is ATP-dependent DNA helicase XPD from Thermoplasma acidophilum (strain ATCC 25905 / DSM 1728 / JCM 9062 / NBRC 15155 / AMRC-C165).